A 65-amino-acid polypeptide reads, in one-letter code: Hirudin-3B' (65 aa).

Residues 1–3 are interaction with thrombin active site; sequence VVY. Cystine bridges form between Cys-6/Cys-14, Cys-16/Cys-28, and Cys-22/Cys-39. Positions 40–65 are disordered; the sequence is VTGEGTPKPQSHNDGDFEEIPEEYLQ. Thr-45 carries an O-linked (GalNAc...) threonine glycan. The tract at residues 55-65 is interaction with fibrinogen-binding exosite of thrombin; sequence DFEEIPEEYLQ. Acidic residues predominate over residues 55 to 65; the sequence is DFEEIPEEYLQ. At Tyr-63 the chain carries Sulfotyrosine.

It belongs to the protease inhibitor I14 (hirudin) family.

The protein localises to the secreted. Its function is as follows. Hirudin is a potent thrombin-specific protease inhibitor. It forms a stable non-covalent complex with alpha-thrombin, thereby abolishing its ability to cleave fibrinogen. In Hirudo medicinalis (Medicinal leech), this protein is Hirudin-3B'.